The primary structure comprises 174 residues: RNA pyrophosphohydrolase (174 aa).

The Nudix hydrolase domain maps to proline 14–alanine 167. Positions glycine 55–glycine 76 match the Nudix box motif.

The protein belongs to the Nudix hydrolase family. RppH subfamily. A divalent metal cation is required as a cofactor.

Its function is as follows. Accelerates the degradation of transcripts by removing pyrophosphate from the 5'-end of triphosphorylated RNA, leading to a more labile monophosphorylated state that can stimulate subsequent ribonuclease cleavage. The sequence is that of RNA pyrophosphohydrolase from Brucella anthropi (strain ATCC 49188 / DSM 6882 / CCUG 24695 / JCM 21032 / LMG 3331 / NBRC 15819 / NCTC 12168 / Alc 37) (Ochrobactrum anthropi).